The following is a 272-amino-acid chain: 27-O-demethylrifamycin SV methyltransferase (272 aa).

S-adenosyl-L-methionine is bound by residues serine 89, glutamine 94, 117 to 118, leucine 134, and histidine 139; that span reads DA.

Belongs to the class I-like SAM-binding methyltransferase superfamily. In terms of assembly, exists probably as a trimer.

It carries out the reaction 27-O-demethylrifamycin SV + S-adenosyl-L-methionine = rifamycin SV + S-adenosyl-L-homocysteine + H(+). It participates in antibiotic biosynthesis; rifamycin B biosynthesis. With respect to regulation, slightly inhibited by Ca(2+) and Mg(2+). Strongly inhibited by Zn(2+), Ni(2+) and Co(2+). In terms of biological role, catalyzes the methylation of 27-O-demethylrifamycin SV (DMRSV) to rifamycin SV. The chain is 27-O-demethylrifamycin SV methyltransferase from Amycolatopsis mediterranei (strain S699) (Nocardia mediterranei).